The chain runs to 419 residues: D-amino acid dehydrogenase (419 aa).

3–17 (VLVLGAGVAGVSSVW) serves as a coordination point for FAD.

The protein belongs to the DadA oxidoreductase family. Requires FAD as cofactor.

The catalysed reaction is a D-alpha-amino acid + A + H2O = a 2-oxocarboxylate + AH2 + NH4(+). It participates in amino-acid degradation; D-alanine degradation; NH(3) and pyruvate from D-alanine: step 1/1. Its function is as follows. Oxidative deamination of D-amino acids. The protein is D-amino acid dehydrogenase of Neisseria gonorrhoeae (strain ATCC 700825 / FA 1090).